The chain runs to 134 residues: DNA-binding protein H-NS, plasmid (134 aa).

Residues leucine 23–glutamate 67 are a coiled coil. The tract at residues serine 77–lysine 96 is disordered. The DNA-binding element occupies glutamine 112 to lysine 117.

Belongs to the histone-like protein H-NS family. Homodimer that oligomerizes on DNA into higher-order complexes that form bridges between disparate regions of DNA compacting it. Interacts with Hha, YdgT and StpA.

The protein resides in the cytoplasm. Its subcellular location is the nucleoid. In terms of biological role, a DNA-binding protein implicated in transcriptional repression and chromosome organization and compaction. Binds DNA, modifying gene expression, especially non-core genes. Does not regulate the same set of genes as its chromosomal counterpart (tested in S.typhimurium strain SL1344 / SV5015, chromosomal H-NS protein is AC A0A0H3NBY9). Thus it has a not-completely overlapping set of gene targets compared to its chromosomal homolog; many of these target genes are either plasmid-encoded or acquired by horizontally transferred genes (HTG). This protein can function in the absence of H-NS-modulating protein Hha (either chromosomal or plasmid-encoded), although many HTG genes are regulated by an H-NS/Hha complex. Binds nucleation sites in AT-rich DNA and bridges them, forming higher-order nucleoprotein complexes and condensing the chromosome. A subset of genes are repressed by H-NS in association with Hha and/or Cnu (ydgT). In Salmonella typhi, this protein is DNA-binding protein H-NS, plasmid (hns).